The primary structure comprises 319 residues: Taste receptor type 2 member 30 (319 aa).

Position 1 (M1) is a topological domain, extracellular. Residues 2–22 traverse the membrane as a helical segment; it reads ITFLPIIFSILIVVIFVVGNF. The Cytoplasmic portion of the chain corresponds to 23-46; sequence ANGFIALVNSIEWVKRQKISFVDQ. The helical transmembrane segment at 47–67 threads the bilayer; it reads ILTALAVSRVGLLWVLLLHWY. Over 68 to 86 the chain is Extracellular; the sequence is ATQLNPAFYSVEVRITVYN. Residues 87 to 107 form a helical membrane-spanning segment; sequence VWAVTNHFSSWLATSLSMFYL. At 108–126 the chain is on the cytoplasmic side; sequence LKIANFSNLIFLRIKRRVK. A helical membrane pass occupies residues 127–147; it reads SVVLVILLGPLLFLVCHLFVI. The Extracellular segment spans residues 148 to 178; sequence NMDETIWTKEYEGNMTWKIKLKSAMYHSNMT. Residues N161 and N176 are each glycosylated (N-linked (GlcNAc...) asparagine). The helical transmembrane segment at 179 to 199 threads the bilayer; the sequence is LTILANFVPLTLTLISFLLLI. The Cytoplasmic segment spans residues 200–229; the sequence is CSLCKHLKKMQLHGKGSQDPSTKVHIKALQ. The chain crosses the membrane as a helical span at residues 230 to 250; the sequence is TVTSFLLLCAIYFLSMIISVC. Over 251-259 the chain is Extracellular; sequence NLGRLQKQP. A helical membrane pass occupies residues 260 to 280; that stretch reads VFMFCQAIIFSYPSTHPFILI. Residues 281 to 319 lie on the Cytoplasmic side of the membrane; the sequence is LGNKKLKQIFLSVLWHVRYWVKDRSLRLHRFTRAALCKG.

Belongs to the G-protein coupled receptor T2R family.

It is found in the membrane. Its function is as follows. Receptor that may play a role in the perception of bitterness and is gustducin-linked. May play a role in sensing the chemical composition of the gastrointestinal content. The activity of this receptor may stimulate alpha gustducin, mediate PLC-beta-2 activation and lead to the gating of TRPM5. The protein is Taste receptor type 2 member 30 (TAS2R30) of Pan paniscus (Pygmy chimpanzee).